Here is a 649-residue protein sequence, read N- to C-terminus: Centrosomal protein of 63 kDa-A (649 aa).

2 coiled-coil regions span residues 19-185 (DSCE…YQHQ) and 222-556 (EEEL…DAAS). The residue at position 560 (S560) is a Phosphoserine; by atm and atr. Positions 612–645 (FLQEEEQRSHELLQRLNAHIEELKQESQRTVEHF) form a coiled coil.

This sequence belongs to the CEP63 family. Phosphorylation at Ser-560 by atm and atr promotes its delocalization from the centrosome and impairs its ability to promote centrosome dependent spindle assembly.

It localises to the cytoplasm. Its subcellular location is the cytoskeleton. It is found in the microtubule organizing center. The protein localises to the centrosome. The protein resides in the centriole. Required for normal spindle assembly. Plays a key role in mother-centriole-dependent centriole duplication. Plays a role in DNA damage response. Following DNA damage, such as double-strand breaks (DSBs), is removed from centrosomes; this leads to the inactivation of spindle assembly and delay in mitotic progression. This chain is Centrosomal protein of 63 kDa-A (cep63-a), found in Xenopus laevis (African clawed frog).